Reading from the N-terminus, the 183-residue chain is Dual specificity protein phosphatase 22-B (183 aa).

The 141-residue stretch at 4-144 (GINKVLPDLY…LQEFQTGELQ (141 aa)) folds into the Tyrosine-protein phosphatase domain. The Phosphocysteine intermediate role is filled by C88.

The protein belongs to the protein-tyrosine phosphatase family. Non-receptor class dual specificity subfamily.

The protein resides in the cytoplasm. Its subcellular location is the nucleus. It carries out the reaction O-phospho-L-tyrosyl-[protein] + H2O = L-tyrosyl-[protein] + phosphate. It catalyses the reaction O-phospho-L-seryl-[protein] + H2O = L-seryl-[protein] + phosphate. The catalysed reaction is O-phospho-L-threonyl-[protein] + H2O = L-threonyl-[protein] + phosphate. Activates the Jnk signaling pathway. Dephosphorylates and deactivates p38 and stress-activated protein kinase/c-Jun N-terminal kinase (SAPK/JNK). The polypeptide is Dual specificity protein phosphatase 22-B (dusp22b) (Danio rerio (Zebrafish)).